The chain runs to 640 residues: Threonine--tRNA ligase (640 aa).

Residues 1-63 form the TGS domain; sequence MSSVTVTLPD…SEDCEIEIVT (63 aa). The segment at 242–533 is catalytic; sequence DHRKLGREMD…LIEHYNGRFP (292 aa). Positions 334, 385, and 510 each coordinate Zn(2+).

The protein belongs to the class-II aminoacyl-tRNA synthetase family. As to quaternary structure, homodimer. Requires Zn(2+) as cofactor.

Its subcellular location is the cytoplasm. The enzyme catalyses tRNA(Thr) + L-threonine + ATP = L-threonyl-tRNA(Thr) + AMP + diphosphate + H(+). Its function is as follows. Catalyzes the attachment of threonine to tRNA(Thr) in a two-step reaction: L-threonine is first activated by ATP to form Thr-AMP and then transferred to the acceptor end of tRNA(Thr). This Halobacterium salinarum (strain ATCC 29341 / DSM 671 / R1) protein is Threonine--tRNA ligase.